A 925-amino-acid polypeptide reads, in one-letter code: Alanine--tRNA ligase (925 aa).

Residues His-611, His-615, Cys-714, and His-718 each coordinate Zn(2+).

It belongs to the class-II aminoacyl-tRNA synthetase family. It depends on Zn(2+) as a cofactor.

The protein localises to the cytoplasm. It carries out the reaction tRNA(Ala) + L-alanine + ATP = L-alanyl-tRNA(Ala) + AMP + diphosphate. Catalyzes the attachment of alanine to tRNA(Ala) in a two-step reaction: alanine is first activated by ATP to form Ala-AMP and then transferred to the acceptor end of tRNA(Ala). Also edits incorrectly charged Ser-tRNA(Ala) and Gly-tRNA(Ala) via its editing domain. The polypeptide is Alanine--tRNA ligase (Methanosarcina acetivorans (strain ATCC 35395 / DSM 2834 / JCM 12185 / C2A)).